We begin with the raw amino-acid sequence, 188 residues long: Elongation factor P (188 aa).

Position 34 is an N6-(3,6-diaminohexanoyl)-5-hydroxylysine (Lys34).

The protein belongs to the elongation factor P family. May be beta-lysylated on the epsilon-amino group of Lys-34 by the combined action of EpmA and EpmB, and then hydroxylated on the C5 position of the same residue by EpmC (if this protein is present). Lysylation is critical for the stimulatory effect of EF-P on peptide-bond formation. The lysylation moiety may extend toward the peptidyltransferase center and stabilize the terminal 3-CCA end of the tRNA. Hydroxylation of the C5 position on Lys-34 may allow additional potential stabilizing hydrogen-bond interactions with the P-tRNA.

It is found in the cytoplasm. The protein operates within protein biosynthesis; polypeptide chain elongation. Its function is as follows. Involved in peptide bond synthesis. Alleviates ribosome stalling that occurs when 3 or more consecutive Pro residues or the sequence PPG is present in a protein, possibly by augmenting the peptidyl transferase activity of the ribosome. Modification of Lys-34 is required for alleviation. The sequence is that of Elongation factor P from Pectobacterium carotovorum subsp. carotovorum (strain PC1).